A 266-amino-acid chain; its full sequence is Isoprenyl transferase (266 aa).

Asp-36 is an active-site residue. Mg(2+) is bound at residue Asp-36. Residues 37-40, Trp-41, Arg-49, His-53, and 81-83 contribute to the substrate site; these read GNGR and STE. Catalysis depends on Asn-84, which acts as the Proton acceptor. Substrate-binding positions include Trp-85, Arg-87, Arg-204, and 210-212; that span reads RIS. Glu-223 lines the Mg(2+) pocket.

Belongs to the UPP synthase family. Homodimer. Requires Mg(2+) as cofactor.

Its function is as follows. Catalyzes the condensation of isopentenyl diphosphate (IPP) with allylic pyrophosphates generating different type of terpenoids. This is Isoprenyl transferase from Prochlorococcus marinus (strain SARG / CCMP1375 / SS120).